Here is a 529-residue protein sequence, read N- to C-terminus: Lysine--tRNA ligase (529 aa).

The 'HIGH' region signature appears at 44–52 (PSGLPHIGT). Residues 290–294 (KISKS) carry the 'KMSKS' region motif. Residue Lys293 coordinates ATP.

The protein belongs to the class-I aminoacyl-tRNA synthetase family.

Its subcellular location is the cytoplasm. It carries out the reaction tRNA(Lys) + L-lysine + ATP = L-lysyl-tRNA(Lys) + AMP + diphosphate. This chain is Lysine--tRNA ligase, found in Rickettsia akari (strain Hartford).